A 511-amino-acid chain; its full sequence is MLMDYEKERTERAERIRKGGAEKYHQSNREKGKLFVRERLSLLFDDDIELEDAFFAECMSDGLPADGVVTAIGKIGGQTVCVMANDSTVKAGSWGAKTVEKIIRIQEIAEKLNCPLIYLVDSAGARITDQINVFPGRRGAGRIFYNQVKLSGRIPQICLLFGPSAAGGAYIPAFCDIVVMVDGNASMYLGSPRMAEMVIGEKVSLEEMGGARMHCSISGCGDILAETEEEAIQLVRAYLSYFPANFQEKAPIHEKRPPKHFETPLADVIPQNQNAPFDMHELIERVIDEDSFFEIKALFAPELLTGLARIHGQPVGIVANQPKVKGGVLFHDSADKAAKFITLCDAFHIPLLFLADIPGFMIGTKVEQAGIIRHGAKMISAMSEATVPKLSVIVRKAYGAGLYAMAGPAFEPDCCLALPTAQIAVMGPEAAVNAVYAKKIAELPEEERAAFISSKREEYKEDINIYRLASEMIIDAVIPANSLRDELAKRLKAYMTKEMTFTNRKHPVYPV.

The CoA carboxyltransferase N-terminal domain maps to 2 to 254; that stretch reads LMDYEKERTE…NFQEKAPIHE (253 aa). The carboxyltransferase stretch occupies residues 2–506; that stretch reads LMDYEKERTE…KEMTFTNRKH (505 aa). Positions 260–506 constitute a CoA carboxyltransferase C-terminal domain; that stretch reads HFETPLADVI…KEMTFTNRKH (247 aa).

The protein belongs to the AccD/PCCB family.

This is an uncharacterized protein from Bacillus subtilis (strain 168).